The sequence spans 398 residues: Dual-specificity RNA methyltransferase RlmN (398 aa).

The Proton acceptor role is filled by Glu119. The Radical SAM core domain occupies 125–364 (EGDRATLCVS…TIVRKTRGDD (240 aa)). A disulfide bridge links Cys132 with Cys369. 3 residues coordinate [4Fe-4S] cluster: Cys139, Cys143, and Cys146. Residues 193 to 194 (GE), Ser225, 247 to 249 (SLH), and Asn326 contribute to the S-adenosyl-L-methionine site. The S-methylcysteine intermediate role is filled by Cys369.

Belongs to the radical SAM superfamily. RlmN family. Requires [4Fe-4S] cluster as cofactor.

Its subcellular location is the cytoplasm. It catalyses the reaction adenosine(2503) in 23S rRNA + 2 reduced [2Fe-2S]-[ferredoxin] + 2 S-adenosyl-L-methionine = 2-methyladenosine(2503) in 23S rRNA + 5'-deoxyadenosine + L-methionine + 2 oxidized [2Fe-2S]-[ferredoxin] + S-adenosyl-L-homocysteine. It carries out the reaction adenosine(37) in tRNA + 2 reduced [2Fe-2S]-[ferredoxin] + 2 S-adenosyl-L-methionine = 2-methyladenosine(37) in tRNA + 5'-deoxyadenosine + L-methionine + 2 oxidized [2Fe-2S]-[ferredoxin] + S-adenosyl-L-homocysteine. Specifically methylates position 2 of adenine 2503 in 23S rRNA and position 2 of adenine 37 in tRNAs. m2A2503 modification seems to play a crucial role in the proofreading step occurring at the peptidyl transferase center and thus would serve to optimize ribosomal fidelity. In Yersinia enterocolitica serotype O:8 / biotype 1B (strain NCTC 13174 / 8081), this protein is Dual-specificity RNA methyltransferase RlmN.